A 1825-amino-acid polypeptide reads, in one-letter code: Serine protease/ABC transporter B family protein tagD (1825 aa).

Residues 1–26 form the signal peptide; that stretch reads MKSNTNIRVLLVSGLILIFIFLGIKF. The Peptidase S8 domain maps to 307-727; it reads PKAIFGTKDT…NAVFDTFAGA (421 aa). Residues Asp-338 and His-384 each act as charge relay system in the active site. The N-linked (GlcNAc...) asparagine glycan is linked to Asn-629. Residue Ser-652 is the Charge relay system of the active site. N-linked (GlcNAc...) asparagine glycans are attached at residues Asn-704, Asn-781, Asn-849, and Asn-896. The chain crosses the membrane as a helical span at residues 971-991; sequence YIVIIVAGGTMSLIITVLILI. An N-linked (GlcNAc...) asparagine glycan is attached at Asn-1018. 4 helical membrane-spanning segments follow: residues 1071–1091, 1116–1136, 1189–1209, and 1210–1230; these read FIIE…ASIL, FIII…SSWI, GILL…VFIF, and TISW…AIVT. Residues 1075–1358 enclose the ABC transmembrane type-1 domain; the sequence is ITISTACSLV…LFGVYSSYVQ (284 aa). N-linked (GlcNAc...) asparagine glycosylation is present at Asn-1295. The next 2 helical transmembrane spans lie at 1304–1324 and 1327–1347; these read WLMV…LAIQ and FTVG…DSST. The tract at residues 1386–1529 is disordered; sequence DNIIDTNQDN…NDDPNDNNGI (144 aa). Low complexity predominate over residues 1388–1402; sequence IIDTNQDNNNNNNND. Over residues 1403 to 1415 the composition is skewed to acidic residues; that stretch reads DISDSSSDDDDDN. A glycan (N-linked (GlcNAc...) asparagine) is linked at Asn-1424. Residues 1465–1494 show a composition bias toward low complexity; it reads GEGIDNNNNNNNDNNINDDNNQQDPNNNNN. The segment covering 1495–1514 has biased composition (acidic residues); that stretch reads EIDDDGDDDGDDDDEGEDEN. A compositionally biased stretch (low complexity) spans 1515–1529; that stretch reads NNNNNNDDPNDNNGI. In terms of domain architecture, ABC transporter spans 1576–1813; sequence IEFKNVSFCY…KGKYYRMFAF (238 aa). Residue Asn-1580 is glycosylated (N-linked (GlcNAc...) asparagine). 1611-1618 contributes to the ATP binding site; that stretch reads GPSGSGKS. 2 N-linked (GlcNAc...) asparagine glycosylation sites follow: Asn-1715 and Asn-1755.

This sequence in the C-terminal section; belongs to the ABC transporter superfamily. ABCB family. Multidrug resistance exporter (TC 3.A.1.201) subfamily. The protein in the N-terminal section; belongs to the peptidase S8 family.

It localises to the membrane. This chain is Serine protease/ABC transporter B family protein tagD (tagD), found in Dictyostelium discoideum (Social amoeba).